The primary structure comprises 67 residues: Phycobilisome 7.8 kDa linker polypeptide, allophycocyanin-associated, core (67 aa).

The 56-residue stretch at 1-56 (MRVFKVTACVPSQTRIRTQRELQNTYFTKLVPYDNWFREQQRIMKMGGKIVKVELA) folds into the CpcD-like domain.

Belongs to the phycobilisome linker protein family.

The protein resides in the cellular thylakoid membrane. Functionally, rod linker protein, associated with allophycocyanin. Linker polypeptides determine the state of aggregation and the location of the disk-shaped phycobiliprotein units within the phycobilisome and modulate their spectroscopic properties in order to mediate a directed and optimal energy transfer. This Arthrospira platensis (Spirulina platensis) protein is Phycobilisome 7.8 kDa linker polypeptide, allophycocyanin-associated, core (apcC).